A 147-amino-acid chain; its full sequence is Large ribosomal subunit protein uL16 (147 aa).

Belongs to the universal ribosomal protein uL16 family. As to quaternary structure, part of the 50S ribosomal subunit.

Binds 23S rRNA and is also seen to make contacts with the A and possibly P site tRNAs. The chain is Large ribosomal subunit protein uL16 from Clostridium tetani (strain Massachusetts / E88).